Consider the following 195-residue polypeptide: Probable cobalt-precorrin-6B C(15)-methyltransferase (decarboxylating) (195 aa).

Residues threonine 24, glycine 48–glycine 52, aspartate 72, and alanine 101 each bind S-adenosyl-L-methionine.

This sequence belongs to the methyltransferase superfamily. Archaeal-type CbiT family.

It carries out the reaction Co-precorrin-6B + S-adenosyl-L-methionine = Co-precorrin-7 + S-adenosyl-L-homocysteine + CO2. Its pathway is cofactor biosynthesis; adenosylcobalamin biosynthesis; cob(II)yrinate a,c-diamide from sirohydrochlorin (anaerobic route): step 8/10. Its function is as follows. Catalyzes the methylation of C-15 in cobalt-precorrin-6B followed by the decarboxylation of C-12 to form cobalt-precorrin-7. This is Probable cobalt-precorrin-6B C(15)-methyltransferase (decarboxylating) from Pyrobaculum calidifontis (strain DSM 21063 / JCM 11548 / VA1).